We begin with the raw amino-acid sequence, 164 residues long: Ribosome maturation factor RimP (164 aa).

It belongs to the RimP family.

It is found in the cytoplasm. In terms of biological role, required for maturation of 30S ribosomal subunits. This Mycoplasma mycoides subsp. mycoides SC (strain CCUG 32753 / NCTC 10114 / PG1) protein is Ribosome maturation factor RimP.